A 478-amino-acid chain; its full sequence is MTRFLFAIILGLLLTACQQETVEETEFVPHKLTELRVGTLYGPQIYMTSGQGNSGFDYDMAVLFAEYLDVPLKMVPYTNLAELYDALKKNEIDIIAAGMTETPARREHFRLGPPLYRVNQVLVYREGMPAPKDISDLKGKITVIADSSFVETLTQLQKRHPTLVWDQVTDKDNEELLTMIANKEIDYTIADSSSVQINRRYLPVLRSGLVLEEKLNVVWLLPPTHSDGLMSQLLAFWHQEKLAGTLDHLNEKYFGHVKRFDYIDTRAFLRAIETVLPRYRQHFETHAGDLDWRKLAATSYQESHWNPNARSPTGVRGMMMLTQPTAKEIGITNRLDAEESIRGGAAYLRDMINRLPESIPESQRMWFALASYNIGYAHVEDARKLAESMELNPNAWQDLKKVLPLLQKRKYYQKTRYGYARGSEAVHYVDSIRRYYDTLVWVDNQSKQQNSEEVAPSDLTAEETPVPAPGTLSPDKPK.

The N-terminal stretch at 1-22 (MTRFLFAIILGLLLTACQQETV) is a signal peptide. The tract at residues 23–257 (EETEFVPHKL…HLNEKYFGHV (235 aa)) is non-LT domain. The interval 258-478 (KRFDYIDTRA…PGTLSPDKPK (221 aa)) is LT domain. Residue Glu302 is part of the active site. A disordered region spans residues 447-478 (KQQNSEEVAPSDLTAEETPVPAPGTLSPDKPK).

It in the N-terminal section; belongs to the bacterial solute-binding protein 3 family. In the C-terminal section; belongs to the transglycosylase Slt family.

Its subcellular location is the cell outer membrane. It catalyses the reaction Exolytic cleavage of the (1-&gt;4)-beta-glycosidic linkage between N-acetylmuramic acid (MurNAc) and N-acetylglucosamine (GlcNAc) residues in peptidoglycan, from either the reducing or the non-reducing ends of the peptidoglycan chains, with concomitant formation of a 1,6-anhydrobond in the MurNAc residue.. Murein-degrading enzyme that degrades murein glycan strands and insoluble, high-molecular weight murein sacculi, with the concomitant formation of a 1,6-anhydromuramoyl product. Lytic transglycosylases (LTs) play an integral role in the metabolism of the peptidoglycan (PG) sacculus. Their lytic action creates space within the PG sacculus to allow for its expansion as well as for the insertion of various structures such as secretion systems and flagella. This chain is Membrane-bound lytic murein transglycosylase F, found in Shewanella oneidensis (strain ATCC 700550 / JCM 31522 / CIP 106686 / LMG 19005 / NCIMB 14063 / MR-1).